The sequence spans 366 residues: tRNA 2-selenouridine synthase (366 aa).

The 124-residue stretch at Phe12 to His135 folds into the Rhodanese domain. Cys95 acts as the S-selanylcysteine intermediate in catalysis.

Belongs to the SelU family. In terms of assembly, monomer.

The enzyme catalyses 5-methylaminomethyl-2-thiouridine(34) in tRNA + selenophosphate + (2E)-geranyl diphosphate + H2O + H(+) = 5-methylaminomethyl-2-selenouridine(34) in tRNA + (2E)-thiogeraniol + phosphate + diphosphate. The catalysed reaction is 5-methylaminomethyl-2-thiouridine(34) in tRNA + (2E)-geranyl diphosphate = 5-methylaminomethyl-S-(2E)-geranyl-thiouridine(34) in tRNA + diphosphate. It carries out the reaction 5-methylaminomethyl-S-(2E)-geranyl-thiouridine(34) in tRNA + selenophosphate + H(+) = 5-methylaminomethyl-2-(Se-phospho)selenouridine(34) in tRNA + (2E)-thiogeraniol. It catalyses the reaction 5-methylaminomethyl-2-(Se-phospho)selenouridine(34) in tRNA + H2O = 5-methylaminomethyl-2-selenouridine(34) in tRNA + phosphate. Involved in the post-transcriptional modification of the uridine at the wobble position (U34) of tRNA(Lys), tRNA(Glu) and tRNA(Gln). Catalyzes the conversion of 2-thiouridine (S2U-RNA) to 2-selenouridine (Se2U-RNA). Acts in a two-step process involving geranylation of 2-thiouridine (S2U) to S-geranyl-2-thiouridine (geS2U) and subsequent selenation of the latter derivative to 2-selenouridine (Se2U) in the tRNA chain. In Pseudomonas savastanoi pv. phaseolicola (strain 1448A / Race 6) (Pseudomonas syringae pv. phaseolicola (strain 1448A / Race 6)), this protein is tRNA 2-selenouridine synthase.